The following is a 194-amino-acid chain: Peptidyl-tRNA hydrolase (194 aa).

Tyr-17 contributes to the tRNA binding site. The active-site Proton acceptor is the His-22. Residues Phe-68, Asn-70, and Asn-116 each contribute to the tRNA site.

It belongs to the PTH family. As to quaternary structure, monomer.

The protein localises to the cytoplasm. It carries out the reaction an N-acyl-L-alpha-aminoacyl-tRNA + H2O = an N-acyl-L-amino acid + a tRNA + H(+). Its function is as follows. Hydrolyzes ribosome-free peptidyl-tRNAs (with 1 or more amino acids incorporated), which drop off the ribosome during protein synthesis, or as a result of ribosome stalling. Catalyzes the release of premature peptidyl moieties from peptidyl-tRNA molecules trapped in stalled 50S ribosomal subunits, and thus maintains levels of free tRNAs and 50S ribosomes. The protein is Peptidyl-tRNA hydrolase of Haemophilus influenzae (strain 86-028NP).